The following is a 549-amino-acid chain: Serine/threonine-protein phosphatase PPQ (549 aa).

Residues 1-13 (MRRSPSRSNNNFA) are compositionally biased toward polar residues. Disordered regions lie at residues 1 to 50 (MRRS…RSLP), 64 to 85 (YNTLASAGKNNNNKRASNDNLL), 133 to 158 (TSSTTTATTSNNILTSPSYRESNYSS), and 189 to 219 (SRVKSPSSSVKAGSFGAPSSPTSGIPNPKSS). Composition is skewed to low complexity over residues 16 to 32 (NCSTNSNSSQQQLTTPS) and 68 to 83 (ASAGKNNNNKRASNDN). Positions 205–217 (APSSPTSGIPNPK) are enriched in polar residues. 4 residues coordinate Mn(2+): aspartate 301, histidine 303, aspartate 329, and asparagine 361. Catalysis depends on histidine 362, which acts as the Proton donor. Histidine 410 and histidine 485 together coordinate Mn(2+).

This sequence belongs to the PPP phosphatase family. PP-Z subfamily. Requires Mn(2+) as cofactor.

It carries out the reaction O-phospho-L-seryl-[protein] + H2O = L-seryl-[protein] + phosphate. The catalysed reaction is O-phospho-L-threonyl-[protein] + H2O = L-threonyl-[protein] + phosphate. In terms of biological role, phosphatase involved in the regulation of protein synthesis. Affects translational accuracy. This chain is Serine/threonine-protein phosphatase PPQ (PPQ1), found in Saccharomyces cerevisiae (strain ATCC 204508 / S288c) (Baker's yeast).